The sequence spans 412 residues: MSFEEVYEELKALVDEQNPSDVLQFCYDFFGEKLKAERSVFRRGDTITESFSDGDESDFLSELNDMVAGPEAIGPDAKYVPELGGLKEMNVSYPQNYNLLRRQSVSTESMNPSAFALETKRTFPPKDPEDLKRLKRSVAGNFLFKNLDEEHYNEVLNAMTEKRIGEAGVAVIVQGAVGDYFYIVEQGEFDVYKRPELNITPEEVLSSGYGNYITTISPGEYFGELALMYNAPRAASVVSKTPNNVIYALDRTSFRRIVFENAYRQRMLYESLLEEVPILSSLDKYQRQKIADALQTVVYQAGSIVIRQGDIGNQFYLIEDGEAEVVKNGKGVVVTLTKGDYFGELALIHETVRNATVQAKTRLKLATFDKPTFNRLLGNAIDLMRNQPRARMGMDNEYGDQSLHRSPPSTKA.

A dimerization and phosphorylation region spans residues 1-142 (MSFEEVYEEL…RLKRSVAGNF (142 aa)). Residues 101 to 105 (RRQSV) carry the Pseudophosphorylation motif motif. Serine 104 carries the post-translational modification Phosphoserine. Residues 143 to 277 (LFKN…EEVP), glutamate 224, arginine 233, 278 to 412 (ILSS…STKA), glutamate 344, and arginine 353 each bind 3',5'-cyclic AMP. The disordered stretch occupies residues 392–412 (MGMDNEYGDQSLHRSPPSTKA).

It belongs to the cAMP-dependent kinase regulatory chain family. Tetramer, composed of 2 regulatory (R) and 2 catalytic (C) subunits. In the presence of cAMP it dissociates into 2 active monomeric C subunits and an R dimer.

The sequence is that of cAMP-dependent protein kinase regulatory subunit (cgs1) from Schizosaccharomyces pombe (strain 972 / ATCC 24843) (Fission yeast).